We begin with the raw amino-acid sequence, 237 residues long: tRNA1(Val) (adenine(37)-N6)-methyltransferase (237 aa).

The protein belongs to the methyltransferase superfamily. tRNA (adenine-N(6)-)-methyltransferase family.

It is found in the cytoplasm. It catalyses the reaction adenosine(37) in tRNA1(Val) + S-adenosyl-L-methionine = N(6)-methyladenosine(37) in tRNA1(Val) + S-adenosyl-L-homocysteine + H(+). In terms of biological role, specifically methylates the adenine in position 37 of tRNA(1)(Val) (anticodon cmo5UAC). The sequence is that of tRNA1(Val) (adenine(37)-N6)-methyltransferase from Tolumonas auensis (strain DSM 9187 / NBRC 110442 / TA 4).